The following is a 115-amino-acid chain: Large ribosomal subunit protein uL24 (115 aa).

The disordered stretch occupies residues 49–68 (NMKTKHHPPSKDQEKGSITK).

It belongs to the universal ribosomal protein uL24 family. As to quaternary structure, part of the 50S ribosomal subunit.

One of two assembly initiator proteins, it binds directly to the 5'-end of the 23S rRNA, where it nucleates assembly of the 50S subunit. Functionally, one of the proteins that surrounds the polypeptide exit tunnel on the outside of the subunit. This Phytoplasma australiense protein is Large ribosomal subunit protein uL24.